The sequence spans 417 residues: Gamma-glutamyl phosphate reductase (417 aa).

It belongs to the gamma-glutamyl phosphate reductase family.

It is found in the cytoplasm. The catalysed reaction is L-glutamate 5-semialdehyde + phosphate + NADP(+) = L-glutamyl 5-phosphate + NADPH + H(+). It functions in the pathway amino-acid biosynthesis; L-proline biosynthesis; L-glutamate 5-semialdehyde from L-glutamate: step 2/2. Catalyzes the NADPH-dependent reduction of L-glutamate 5-phosphate into L-glutamate 5-semialdehyde and phosphate. The product spontaneously undergoes cyclization to form 1-pyrroline-5-carboxylate. The protein is Gamma-glutamyl phosphate reductase of Escherichia coli (strain K12 / MC4100 / BW2952).